Reading from the N-terminus, the 65-residue chain is Large ribosomal subunit protein bL28 (65 aa).

The protein belongs to the bacterial ribosomal protein bL28 family.

The polypeptide is Large ribosomal subunit protein bL28 (Bifidobacterium animalis subsp. lactis (strain AD011)).